A 495-amino-acid polypeptide reads, in one-letter code: Flagellin (495 aa).

It belongs to the bacterial flagellin family.

The protein localises to the secreted. The protein resides in the bacterial flagellum. Flagellin is the subunit protein which polymerizes to form the filaments of bacterial flagella. This chain is Flagellin (fliC), found in Salmonella typhimurium (strain LT2 / SGSC1412 / ATCC 700720).